A 185-amino-acid polypeptide reads, in one-letter code: Monooxygenase hypC (185 aa).

Helical transmembrane passes span 35 to 55 (TGTF…PVIL), 75 to 95 (GHIQ…YAAY), and 106 to 126 (PFAV…VFMA). N129 is a glycosylation site (N-linked (GlcNAc...) asparagine). The helical transmembrane segment at 165-185 (ALFPLSGAVLGLLSTCKIVSF) threads the bilayer.

Belongs to the anthrone oxygenase family.

It is found in the membrane. Its pathway is mycotoxin biosynthesis. Monooxygenase; part of the fragmented gene cluster that mediates the biosynthesis of dothistromin (DOTH), a polyketide toxin very similar in structure to the aflatoxin precursor, versicolorin B. The first step of the pathway is the conversion of acetate to norsolorinic acid (NOR) and requires the fatty acid synthase subunits hexA and hexB, as well as the polyketide synthase pksA. PksA combines a hexanoyl starter unit and 7 malonyl-CoA extender units to synthesize the precursor NOR. The hexanoyl starter unit is provided to the acyl-carrier protein (ACP) domain by the fungal fatty acid synthase hexA/hexB. The second step is the conversion of NOR to averantin (AVN) and requires the norsolorinic acid ketoreductase nor1, which catalyzes the dehydration of norsolorinic acid to form (1'S)-averantin. The cytochrome P450 monooxygenase avnA then catalyzes the hydroxylation of AVN to 5'hydroxyaverantin (HAVN). The next step is performed by adhA that transforms HAVN to averufin (AVF). Averufin might then be converted to hydroxyversicolorone by cypX and avfA. Hydroxyversicolorone is further converted versiconal hemiacetal acetate (VHA) by moxY. VHA is then the substrate for the versiconal hemiacetal acetate esterase est1 to yield versiconal (VAL). Versicolorin B synthase vbsA then converts VAL to versicolorin B (VERB) by closing the bisfuran ring. Then, the activity of the versicolorin B desaturase verB leads to versicolorin A (VERA). DotB, a predicted chloroperoxidase, may perform epoxidation of the A-ring of VERA. Alternatively, a cytochrome P450, such as cypX or avnA could catalyze this step. It is also possible that another, uncharacterized, cytochrome P450 enzyme is responsible for this step. Opening of the epoxide could potentially be achieved by the epoxide hydrolase epoA. However, epoA seems not to be required for DOTH biosynthesis, but other epoxide hydrolases may have the ability to complement this hydrolysis. Alternatively, opening of the epoxide ring could be achieved non-enzymatically. The next step is the deoxygenation of ring A to yield the 5,8-dihydroxyanthraquinone which is most likely catalyzed by the NADPH dehydrogenase encoded by ver1. The last stages of DOTH biosynthesis are proposed to involve hydroxylation of the bisfuran. OrdB and norB might have oxidative roles here. An alternative possibility is that cytochrome P450 monoogenases such as avnA and cypX might perform these steps in addition to previously proposed steps. The polypeptide is Monooxygenase hypC (Dothistroma septosporum (strain NZE10 / CBS 128990) (Red band needle blight fungus)).